A 150-amino-acid polypeptide reads, in one-letter code: Multiprotein-bridging factor 1 (150 aa).

The segment at Ser-36–Ala-71 is disordered. Positions Pro-48–Ser-70 are enriched in basic and acidic residues. The 54-residue stretch at Ile-84 to Ala-137 folds into the HTH cro/C1-type domain. A DNA-binding region (H-T-H motif) is located at residues Gln-94 to Ser-113.

It belongs to the MBF1 family.

Its function is as follows. Transcriptional coactivator that stimulates GCN4-dependent transcriptional activity by bridging the DNA-binding region of GCN4 and TBP (SPT15), thereby recruiting TBP to GCN4-bound promoters. Involved in induction of the ribosome quality control (RQC) pathway; a pathway that degrades nascent peptide chains during problematic translation. Required to prevent stalled ribosomes from frameshifting. In Cryptococcus neoformans var. neoformans serotype D (strain B-3501A) (Filobasidiella neoformans), this protein is Multiprotein-bridging factor 1 (MBF1).